We begin with the raw amino-acid sequence, 131 residues long: Arsenate reductase 2 (131 aa).

Catalysis depends on nucleophile residues C10, C82, and C89. Disulfide bonds link C10–C82 and C82–C89.

The protein belongs to the low molecular weight phosphotyrosine protein phosphatase family. Thioredoxin-coupled ArsC subfamily.

The protein resides in the cytoplasm. It carries out the reaction arsenate + [thioredoxin]-dithiol + H(+) = arsenite + [thioredoxin]-disulfide + H2O. Catalyzes the reduction of arsenate [As(V)] to arsenite [As(III)]. The protein is Arsenate reductase 2 of Staphylococcus saprophyticus subsp. saprophyticus (strain ATCC 15305 / DSM 20229 / NCIMB 8711 / NCTC 7292 / S-41).